The chain runs to 351 residues: MSLLRRRFVKQSVNCITFLQILAERSFSTVKIPPGRRKTTEFDKLINEAGSSGDFETVRRLLNNRIVLGSFNTSDTFKFLTNTASYSSYLEDLRRVLPQIDGGFSRKNAYDILISRLCKLGRIDDALIVIGDMSNGRLGLTPSTYHPILCSLTRKYKIEEAWRVVESMRSKSVSMDVTAYNYFLTSHCYDGELESASEVMRKIEEDGNSPDSRSYDALVLGACRAGKVEAAMAILRRMEEDGVTVLYSTHAHVITGLVEGGYYALGLEFVMAYAGKDLRLDSESFGFLAGKLVKRKRYEEAMIVVKEMVMRGLRMGDELRQFYEGNVRYDDDDEDSLVQSERECYIEQKLN.

The transit peptide at 1–27 (MSLLRRRFVKQSVNCITFLQILAERSF) directs the protein to the mitochondrion. 6 PPR repeats span residues 106–140 (RKNA…RLGL), 141–175 (TPST…SVSM), 176–210 (DVTA…GNSP), 211–245 (DSRS…GVTV), 246–280 (LYST…DLRL), and 281–315 (DSES…GLRM).

The protein belongs to the PPR family. P subfamily.

It is found in the mitochondrion. The polypeptide is Pentatricopeptide repeat-containing protein At2g40240, mitochondrial (Arabidopsis thaliana (Mouse-ear cress)).